A 144-amino-acid chain; its full sequence is Putative golgin subfamily A member 2B (144 aa).

2 disordered regions span residues 1–20 (MDSEEEEEVPQPMPSIPEDL) and 95–132 (SCGRVHRTVPEPEGSAEGGGVHQQAGPGQGRGEGEAAG). The span at 110 to 131 (AEGGGVHQQAGPGQGRGEGEAA) shows a compositional bias: gly residues.

Belongs to the GOLGA2 family.

This chain is Putative golgin subfamily A member 2B (GOLGA2P5), found in Homo sapiens (Human).